The primary structure comprises 831 residues: Prickle-like protein 1 (831 aa).

In terms of domain architecture, PET spans 14 to 122 (FGCQRSSTSD…TIKLLSRAMM (109 aa)). LIM zinc-binding domains lie at 124-189 (AVCE…LLKP), 189-249 (PRCS…LYAE), and 249-313 (EYCE…EDIH). Residues 314-346 (ASDSSDSAFQSARSRDSRRSVRMGRSSRSADQC) form a disordered region. Ser315, Ser591, and Ser594 each carry phosphoserine. Disordered stretches follow at residues 664–688 (EERG…NALN) and 763–831 (CSSS…CIIS). Basic residues predominate over residues 669–680 (RPHHHRHRRSRK). Residue Ser683 is modified to Phosphoserine. The segment covering 797–812 (DLSSPASALPTPQFNQ) has biased composition (polar residues). Positions 815-831 (TKSKKKKGHRGKNCIIS) are enriched in basic residues. Residue Cys828 is modified to Cysteine methyl ester. The S-farnesyl cysteine moiety is linked to residue Cys828. Positions 829–831 (IIS) are cleaved as a propeptide — removed in mature form.

The protein belongs to the prickle / espinas / testin family. Interacts with REST.

It is found in the nucleus membrane. The protein localises to the cytoplasm. Its subcellular location is the cytosol. In terms of biological role, involved in the planar cell polarity pathway that controls convergent extension during gastrulation and neural tube closure. Convergent extension is a complex morphogenetic process during which cells elongate, move mediolaterally, and intercalate between neighboring cells, leading to convergence toward the mediolateral axis and extension along the anteroposterior axis. Necessary for nuclear localization of REST. May serve as nuclear receptor. The sequence is that of Prickle-like protein 1 (Prickle1) from Rattus norvegicus (Rat).